The sequence spans 149 residues: Calmodulin (149 aa).

Position 2 is an N-acetylalanine (alanine 2). EF-hand domains are found at residues 8 to 43, 44 to 79, 81 to 116, and 117 to 149; these read EQISEFKEAFSLFDKDGDGTITTKELGTVMRSLGQN, PTEAELQDMINEVDADGNGTIDFPEFLTMMARKMRD, DSEEEIKEAFKVFDKDGNGYISAAELRHVMTNLGEK, and LTDNEVDEMIREADVDGDGQINYEEFVKMMLSK. Positions 21, 23, 25, 27, 32, 57, 59, 61, 63, 68, 94, 96, 98, 100, 105, 130, 132, 134, 136, and 141 each coordinate Ca(2+).

Belongs to the calmodulin family.

Its function is as follows. Calmodulin mediates the control of a large number of enzymes, ion channels and other proteins by Ca(2+). Among the enzymes to be stimulated by the calmodulin-Ca(2+) complex are a number of protein kinases and phosphatases. This is Calmodulin (CMD1) from Pleurotus ostreatus (Oyster mushroom).